A 169-amino-acid chain; its full sequence is uncharacterized protein (169 aa).

Residues 4–160 form the N-acetyltransferase domain; the sequence is IEVKRLLVNY…EGVKEQLSED (157 aa).

This is an uncharacterized protein from Halalkalibacterium halodurans (strain ATCC BAA-125 / DSM 18197 / FERM 7344 / JCM 9153 / C-125) (Bacillus halodurans).